We begin with the raw amino-acid sequence, 90 residues long: Sec-independent protein translocase protein TatAo (90 aa).

A helical transmembrane segment spans residues 8–28 (FPGLPGGPELLIVLLIVVLLF). Residues 39 to 90 (SSGQAMGEFRRGREEIEEELKKGAEGGDDEGENGDEAEADDADATETEAESR) are disordered. Over residues 46 to 63 (EFRRGREEIEEELKKGAE) the composition is skewed to basic and acidic residues. Positions 64 to 90 (GGDDEGENGDEAEADDADATETEAESR) are enriched in acidic residues.

It belongs to the TatA/E family. In terms of assembly, forms a complex with TatC. Cytoplasmic and membrane-bound TatA form high-molecular-weight complexes.

The protein localises to the cell membrane. The protein resides in the cytoplasm. Functionally, part of the twin-arginine translocation (Tat) system that transports large folded proteins containing a characteristic twin-arginine motif in their signal peptide across membranes. TatA could form the protein-conducting channel of the Tat system. The sequence is that of Sec-independent protein translocase protein TatAo from Haloferax volcanii (strain ATCC 29605 / DSM 3757 / JCM 8879 / NBRC 14742 / NCIMB 2012 / VKM B-1768 / DS2) (Halobacterium volcanii).